A 658-amino-acid polypeptide reads, in one-letter code: MSFSISLSFPDGSQRDFPAEITGLELAESISKSLAKKAIAYSLNGVIRDLLDPLEQSGQVEIITRDDPRALQLIRHSCAHVLAEAVQELFPETQVTIGPVIENGFYYDFARQQPFTLEDLNTIEKKMREIIQRNKFFKKEIWSREKAKKIFSDKGELYKVELIDAIPEDQDLKIYYQGDWFDLCRGPHVPSTGQIGNAFKLMKVAGAYWRGDANNPMLTRIYGTAFSNENALKAYLNMLEEAEKRDHRRLGREMDLFHFQEEGPGMIFWHPKGWKMFQNLVSYMRRRLDEHKYDEVNAPQVLDKSLWETSGHWGWYQENMFKTIPATNDWNDEHVYALKPMNCPGHVQIFKHGLKSYRDLPIRLAEFGLLHRYEPSGSLHGLMRVRSFTQDDAHVFCTDEQLADECLKINDLILSTYADFGFEEIILKLSTRPEKRVGSDELWDHAENIMMSVLKTIEKEAKGRIKTSILQGEGAFYGPKFEYTLKDAIGREWQCGTTQVDFNLPERFEVFYINRDSEKCQPVMIHRAIFGSMERFLGILIENFAGHMPLWLAPQQIVVTTITSEANEYAEKITAKLKASGLSAVSDLRSEKINYKIREHSLQKVPVILVCGKRESETNSVNMRRLGSMNQISLPIDQAIKQLTNEAIPPDLRRFMNS.

The TGS domain maps to 1-64; sequence MSFSISLSFP…EQSGQVEIIT (64 aa). Residues 246–549 are catalytic; the sequence is DHRRLGREMD…LIENFAGHMP (304 aa). Residues C343, H394, and H526 each contribute to the Zn(2+) site.

Belongs to the class-II aminoacyl-tRNA synthetase family. In terms of assembly, homodimer. Zn(2+) serves as cofactor.

The protein resides in the cytoplasm. The enzyme catalyses tRNA(Thr) + L-threonine + ATP = L-threonyl-tRNA(Thr) + AMP + diphosphate + H(+). In terms of biological role, catalyzes the attachment of threonine to tRNA(Thr) in a two-step reaction: L-threonine is first activated by ATP to form Thr-AMP and then transferred to the acceptor end of tRNA(Thr). Also edits incorrectly charged L-seryl-tRNA(Thr). The protein is Threonine--tRNA ligase of Bartonella bacilliformis (strain ATCC 35685 / KC583 / Herrer 020/F12,63).